The chain runs to 263 residues: Small ribosomal subunit protein eS4, X isoform (263 aa).

One can recognise an S4 RNA-binding domain in the interval 42–104 (LPLIIFLRNR…TGEHFRLVYD (63 aa)). K230 participates in a covalent cross-link: Glycyl lysine isopeptide (Lys-Gly) (interchain with G-Cter in SUMO2). At K233 the chain carries N6-acetyllysine.

Belongs to the eukaryotic ribosomal protein eS4 family. As to quaternary structure, component of the small ribosomal subunit. Part of the small subunit (SSU) processome, composed of more than 70 proteins and the RNA chaperone small nucleolar RNA (snoRNA) U3. Identified in a IGF2BP1-dependent mRNP granule complex containing untranslated mRNAs.

The protein localises to the cytoplasm. It is found in the nucleus. It localises to the nucleolus. Functionally, component of the small ribosomal subunit. The ribosome is a large ribonucleoprotein complex responsible for the synthesis of proteins in the cell. Part of the small subunit (SSU) processome, first precursor of the small eukaryotic ribosomal subunit. During the assembly of the SSU processome in the nucleolus, many ribosome biogenesis factors, an RNA chaperone and ribosomal proteins associate with the nascent pre-rRNA and work in concert to generate RNA folding, modifications, rearrangements and cleavage as well as targeted degradation of pre-ribosomal RNA by the RNA exosome. In Monodelphis domestica (Gray short-tailed opossum), this protein is Small ribosomal subunit protein eS4, X isoform (RPS4X).